Here is a 484-residue protein sequence, read N- to C-terminus: UDP-N-acetylmuramate--L-alanine ligase (484 aa).

126–132 (GTHGKTT) serves as a coordination point for ATP.

It belongs to the MurCDEF family.

It is found in the cytoplasm. It catalyses the reaction UDP-N-acetyl-alpha-D-muramate + L-alanine + ATP = UDP-N-acetyl-alpha-D-muramoyl-L-alanine + ADP + phosphate + H(+). It participates in cell wall biogenesis; peptidoglycan biosynthesis. Cell wall formation. The chain is UDP-N-acetylmuramate--L-alanine ligase from Aeromonas hydrophila subsp. hydrophila (strain ATCC 7966 / DSM 30187 / BCRC 13018 / CCUG 14551 / JCM 1027 / KCTC 2358 / NCIMB 9240 / NCTC 8049).